We begin with the raw amino-acid sequence, 371 residues long: 4-hydroxy-3-methylbut-2-en-1-yl diphosphate synthase (flavodoxin) (371 aa).

[4Fe-4S] cluster contacts are provided by C270, C273, C305, and E312.

This sequence belongs to the IspG family. [4Fe-4S] cluster is required as a cofactor.

It carries out the reaction (2E)-4-hydroxy-3-methylbut-2-enyl diphosphate + oxidized [flavodoxin] + H2O + 2 H(+) = 2-C-methyl-D-erythritol 2,4-cyclic diphosphate + reduced [flavodoxin]. It functions in the pathway isoprenoid biosynthesis; isopentenyl diphosphate biosynthesis via DXP pathway; isopentenyl diphosphate from 1-deoxy-D-xylulose 5-phosphate: step 5/6. Functionally, converts 2C-methyl-D-erythritol 2,4-cyclodiphosphate (ME-2,4cPP) into 1-hydroxy-2-methyl-2-(E)-butenyl 4-diphosphate. The protein is 4-hydroxy-3-methylbut-2-en-1-yl diphosphate synthase (flavodoxin) of Shewanella piezotolerans (strain WP3 / JCM 13877).